Here is a 62-residue protein sequence, read N- to C-terminus: UPF0434 protein RSc2531 (62 aa).

The protein belongs to the UPF0434 family.

The chain is UPF0434 protein RSc2531 from Ralstonia nicotianae (strain ATCC BAA-1114 / GMI1000) (Ralstonia solanacearum).